A 597-amino-acid polypeptide reads, in one-letter code: Arginine--tRNA ligase (597 aa).

A 'HIGH' region motif is present at residues 125–135 (PNTNKPLHLGH).

It belongs to the class-I aminoacyl-tRNA synthetase family. Monomer.

It localises to the cytoplasm. The enzyme catalyses tRNA(Arg) + L-arginine + ATP = L-arginyl-tRNA(Arg) + AMP + diphosphate. The polypeptide is Arginine--tRNA ligase (Parabacteroides distasonis (strain ATCC 8503 / DSM 20701 / CIP 104284 / JCM 5825 / NCTC 11152)).